The chain runs to 173 residues: uncharacterized protein (173 aa).

Positions 1 to 20 are cleaved as a signal peptide; that stretch reads MWYKVLGIVSLCSVYVSTQG. A glycan (N-linked (GlcNAc...) asparagine) is linked at Asn53.

Component of the acid-insoluble organic matrix of calcified shell layers (at protein level).

It localises to the secreted. This is an uncharacterized protein from Haliotis asinina (Donkey's ear abalone).